The following is an 876-amino-acid chain: Alanine--tRNA ligase (876 aa).

Zn(2+) is bound by residues histidine 565, histidine 569, cysteine 667, and histidine 671.

The protein belongs to the class-II aminoacyl-tRNA synthetase family. It depends on Zn(2+) as a cofactor.

It localises to the cytoplasm. The catalysed reaction is tRNA(Ala) + L-alanine + ATP = L-alanyl-tRNA(Ala) + AMP + diphosphate. In terms of biological role, catalyzes the attachment of alanine to tRNA(Ala) in a two-step reaction: alanine is first activated by ATP to form Ala-AMP and then transferred to the acceptor end of tRNA(Ala). Also edits incorrectly charged Ser-tRNA(Ala) and Gly-tRNA(Ala) via its editing domain. This chain is Alanine--tRNA ligase, found in Staphylococcus saprophyticus subsp. saprophyticus (strain ATCC 15305 / DSM 20229 / NCIMB 8711 / NCTC 7292 / S-41).